The chain runs to 215 residues: Peroxiredoxin 1 (215 aa).

One can recognise a Thioredoxin domain in the interval Met-1–Val-157. The Cysteine sulfenic acid (-SOH) intermediate role is filled by Cys-45. Arg-120 contacts substrate.

The protein belongs to the peroxiredoxin family. Prx6 subfamily. Homodecamer. Pentamer of dimers that assemble into a ring structure.

It is found in the cytoplasm. It carries out the reaction a hydroperoxide + [thioredoxin]-dithiol = an alcohol + [thioredoxin]-disulfide + H2O. Its function is as follows. Thiol-specific peroxidase that catalyzes the reduction of hydrogen peroxide and organic hydroperoxides to water and alcohols, respectively. Plays a role in cell protection against oxidative stress by detoxifying peroxides. This Sulfuracidifex metallicus (Sulfolobus metallicus) protein is Peroxiredoxin 1.